Reading from the N-terminus, the 86-residue chain is Large ribosomal subunit protein bL31 (86 aa).

Residues 65 to 86 (YGMGSANSATSKEQKEEKDSKK) form a disordered region. The segment covering 76–86 (KEQKEEKDSKK) has biased composition (basic and acidic residues).

It belongs to the bacterial ribosomal protein bL31 family. Type A subfamily. In terms of assembly, part of the 50S ribosomal subunit.

Its function is as follows. Binds the 23S rRNA. In Prochlorococcus marinus (strain AS9601), this protein is Large ribosomal subunit protein bL31.